The primary structure comprises 380 residues: MNLKLTSINGGLKIEVHENSSQKSGITTGSVATAASVAALLKLVDKAPDIVKITAPTTTLTVEIEDTSFIDNNTARAIVKKPNYNDPDVTRGMEIISEVTLTNNSGVIEITGGDGVGRVTKPGLQIPVGEYAINPVPRKMIKENIMKYLPEDNGAIIKIIIPEGKKIAPKTMNSRLGIIDGISILGTTGIARPMSSKAYTDSLRVQIDVALANGYKDLLFVPGNIGTRIAKEKLVLDEDEIIEMSNFVGYMLEEAHKTGKIRSITLFGHAGKLIKIAAGIFNTKQSVADARREIMTAYAGLVGANKKTLHDIYNCITTEDVIKILDENNITTEVFELIANKIVELCSLKYEGIKFHAVIVKMNGEILTPSHIQNIPFNKK.

This sequence belongs to the CbiD family.

The catalysed reaction is Co-precorrin-5B + S-adenosyl-L-methionine = Co-precorrin-6A + S-adenosyl-L-homocysteine. It functions in the pathway cofactor biosynthesis; adenosylcobalamin biosynthesis; cob(II)yrinate a,c-diamide from sirohydrochlorin (anaerobic route): step 6/10. Functionally, catalyzes the methylation of C-1 in cobalt-precorrin-5B to form cobalt-precorrin-6A. In Methanosphaera stadtmanae (strain ATCC 43021 / DSM 3091 / JCM 11832 / MCB-3), this protein is Cobalt-precorrin-5B C(1)-methyltransferase.